Reading from the N-terminus, the 422-residue chain is Isocitrate dehydrogenase [NADP] (422 aa).

Residue Thr94 participates in NADP(+) binding. Ser103, Asn105, Arg109, Arg119, and Arg143 together coordinate D-threo-isocitrate. Residue Asp310 participates in Mg(2+) binding. NADP(+)-binding positions include 344–350 (HGTAPKY), Asn357, Tyr396, and Arg400.

It belongs to the isocitrate and isopropylmalate dehydrogenases family. As to quaternary structure, homodimer. Mg(2+) is required as a cofactor. Requires Mn(2+) as cofactor.

It carries out the reaction D-threo-isocitrate + NADP(+) = 2-oxoglutarate + CO2 + NADPH. Its function is as follows. Catalyzes the oxidative decarboxylation of isocitrate to 2-oxoglutarate and carbon dioxide with the concomitant reduction of NADP(+). In Staphylococcus epidermidis (strain ATCC 35984 / DSM 28319 / BCRC 17069 / CCUG 31568 / BM 3577 / RP62A), this protein is Isocitrate dehydrogenase [NADP] (icd).